Consider the following 151-residue polypeptide: Large ribosomal subunit protein bL9 (151 aa).

It belongs to the bacterial ribosomal protein bL9 family.

Its function is as follows. Binds to the 23S rRNA. The protein is Large ribosomal subunit protein bL9 of Nitrosomonas europaea (strain ATCC 19718 / CIP 103999 / KCTC 2705 / NBRC 14298).